A 219-amino-acid polypeptide reads, in one-letter code: Peptide methionine sulfoxide reductase MsrA (219 aa).

The tract at residues 1-20 (MGLFRSPRQNLPTAADALPG) is disordered. Cys-55 is an active-site residue.

The protein belongs to the MsrA Met sulfoxide reductase family.

It carries out the reaction L-methionyl-[protein] + [thioredoxin]-disulfide + H2O = L-methionyl-(S)-S-oxide-[protein] + [thioredoxin]-dithiol. The catalysed reaction is [thioredoxin]-disulfide + L-methionine + H2O = L-methionine (S)-S-oxide + [thioredoxin]-dithiol. In terms of biological role, has an important function as a repair enzyme for proteins that have been inactivated by oxidation. Catalyzes the reversible oxidation-reduction of methionine sulfoxide in proteins to methionine. This is Peptide methionine sulfoxide reductase MsrA from Rhodospirillum centenum (strain ATCC 51521 / SW).